A 433-amino-acid polypeptide reads, in one-letter code: Glutamate-1-semialdehyde 2,1-aminomutase (433 aa).

Lys271 bears the N6-(pyridoxal phosphate)lysine mark.

It belongs to the class-III pyridoxal-phosphate-dependent aminotransferase family. HemL subfamily. In terms of assembly, homodimer. The cofactor is pyridoxal 5'-phosphate.

It is found in the cytoplasm. It catalyses the reaction (S)-4-amino-5-oxopentanoate = 5-aminolevulinate. The protein operates within porphyrin-containing compound metabolism; protoporphyrin-IX biosynthesis; 5-aminolevulinate from L-glutamyl-tRNA(Glu): step 2/2. It functions in the pathway porphyrin-containing compound metabolism; chlorophyll biosynthesis. The protein is Glutamate-1-semialdehyde 2,1-aminomutase of Prochlorococcus marinus subsp. pastoris (strain CCMP1986 / NIES-2087 / MED4).